A 138-amino-acid chain; its full sequence is Basic phospholipase A2 Pla2Vb (138 aa).

Residues 1–16 (MRTLWIVAVWLMGVEG) form the signal peptide. Cystine bridges form between Cys-42–Cys-131, Cys-44–Cys-60, Cys-59–Cys-111, Cys-65–Cys-138, Cys-66–Cys-104, Cys-73–Cys-97, and Cys-91–Cys-102. Residues Tyr-43, Gly-45, and Gly-47 each contribute to the Ca(2+) site. His-63 is a catalytic residue. Residue Asp-64 participates in Ca(2+) binding. Asp-105 is a catalytic residue.

Belongs to the phospholipase A2 family. Group II subfamily. D49 sub-subfamily. Requires Ca(2+) as cofactor. In terms of tissue distribution, expressed by the venom gland.

It localises to the secreted. It catalyses the reaction a 1,2-diacyl-sn-glycero-3-phosphocholine + H2O = a 1-acyl-sn-glycero-3-phosphocholine + a fatty acid + H(+). In terms of biological role, snake venom phospholipase A2 (PLA2) that exhibits medium anticoagulant effects by binding to factor Xa (F10) and inhibiting the prothrombinase activity (IC(50) is 90 nM). PLA2 catalyzes the calcium-dependent hydrolysis of the 2-acyl groups in 3-sn-phosphoglycerides. The sequence is that of Basic phospholipase A2 Pla2Vb from Vipera berus berus (Common viper).